Here is a 142-residue protein sequence, read N- to C-terminus: Hemoglobin subunit alpha-1 (142 aa).

At Ser1 the chain carries N-acetylserine. The Globin domain maps to 1–142 (SLSDKDKAAV…VALALAERYR (142 aa)). His59 serves as a coordination point for O2. A heme b-binding site is contributed by His88.

The protein belongs to the globin family. Hb1 is a heterotetramer of two alpha-2 chains and two beta chains, while Hb2 is a heterotetramer of two alpha-2 chains and two beta chains. As to expression, red blood cells.

In terms of biological role, involved in oxygen transport from gills to the various peripheral tissues. The sequence is that of Hemoglobin subunit alpha-1 (hba1) from Notothenia angustata (Rockcod).